The primary structure comprises 361 residues: MQERHTEQDYRALLIADTPIIDVRAPIEFEQGAMPAAINLPLMNNDERAAVGICYKQQGSDAALALGHKLVAGEIRQQRMDAWRAACLQNPHGILCCARGGQRSHIVQRWLHDAGIDYPLVEGGYKALRQTAIQATIELAQKPIVLIGGCTGSGKTLLVQQQPNGVDLEGLARHRGSAFGRTLQPQLSQASFENMLAAEMLKTDAHQDLRLWVLEDESRMIGSNHLPECLRERMTQATIAVVEDPFEIRLERLNEEYFLRMHHDFTHAYGDEQGWQEYCEYLHHGLSAIKRRLGLQRYNELAARLDAALTTQLTTGSTDGHLAWLVPLLEEYYDPMYRYQLEKKAEKVVFRGEWAGSGGMG.

Residues 14–137 (LIADTPIIDV…LRQTAIQATI (124 aa)) enclose the Rhodanese domain. Cys-97 functions as the S-selanylcysteine intermediate in the catalytic mechanism.

Belongs to the SelU family. As to quaternary structure, monomer.

The catalysed reaction is 5-methylaminomethyl-2-thiouridine(34) in tRNA + selenophosphate + (2E)-geranyl diphosphate + H2O + H(+) = 5-methylaminomethyl-2-selenouridine(34) in tRNA + (2E)-thiogeraniol + phosphate + diphosphate. The enzyme catalyses 5-methylaminomethyl-2-thiouridine(34) in tRNA + (2E)-geranyl diphosphate = 5-methylaminomethyl-S-(2E)-geranyl-thiouridine(34) in tRNA + diphosphate. It carries out the reaction 5-methylaminomethyl-S-(2E)-geranyl-thiouridine(34) in tRNA + selenophosphate + H(+) = 5-methylaminomethyl-2-(Se-phospho)selenouridine(34) in tRNA + (2E)-thiogeraniol. It catalyses the reaction 5-methylaminomethyl-2-(Se-phospho)selenouridine(34) in tRNA + H2O = 5-methylaminomethyl-2-selenouridine(34) in tRNA + phosphate. Its function is as follows. Involved in the post-transcriptional modification of the uridine at the wobble position (U34) of tRNA(Lys), tRNA(Glu) and tRNA(Gln). Catalyzes the conversion of 2-thiouridine (S2U-RNA) to 2-selenouridine (Se2U-RNA). Acts in a two-step process involving geranylation of 2-thiouridine (S2U) to S-geranyl-2-thiouridine (geS2U) and subsequent selenation of the latter derivative to 2-selenouridine (Se2U) in the tRNA chain. The chain is tRNA 2-selenouridine synthase from Escherichia coli O6:H1 (strain CFT073 / ATCC 700928 / UPEC).